The chain runs to 43 residues: Cytochrome b559 subunit beta (43 aa).

A helical transmembrane segment spans residues 18–34 (WLAVHTLAVPSVFFLGA). Heme is bound at residue histidine 22.

It belongs to the PsbE/PsbF family. As to quaternary structure, heterodimer of an alpha subunit and a beta subunit. PSII is composed of 1 copy each of membrane proteins PsbA, PsbB, PsbC, PsbD, PsbE, PsbF, PsbH, PsbI, PsbJ, PsbK, PsbL, PsbM, PsbT, PsbX, PsbY, PsbZ, Psb30/Ycf12, peripheral proteins PsbO, CyanoQ (PsbQ), PsbU, PsbV and a large number of cofactors. It forms dimeric complexes. Heme b is required as a cofactor.

The protein resides in the cellular thylakoid membrane. Its function is as follows. This b-type cytochrome is tightly associated with the reaction center of photosystem II (PSII). PSII is a light-driven water:plastoquinone oxidoreductase that uses light energy to abstract electrons from H(2)O, generating O(2) and a proton gradient subsequently used for ATP formation. It consists of a core antenna complex that captures photons, and an electron transfer chain that converts photonic excitation into a charge separation. In Picosynechococcus sp. (strain ATCC 27264 / PCC 7002 / PR-6) (Agmenellum quadruplicatum), this protein is Cytochrome b559 subunit beta.